Reading from the N-terminus, the 282-residue chain is Glucuronoxylan 4-O-methyltransferase 1 (282 aa).

Residues Val-13–Thr-33 form a helical membrane-spanning segment.

The protein belongs to the methyltransferase superfamily. As to expression, expressed in rosette leaves, stems, flowers and siliques.

It localises to the golgi apparatus membrane. It catalyses the reaction glucuronoxylan D-glucuronate + n S-adenosyl-L-methionine = glucuronoxylan 4-O-methyl-D-glucuronate + n S-adenosyl-L-homocysteine + n H(+). In terms of biological role, methyltransferase catalyzing 4-O-methylation of glucuronic acid side chains on xylan. In Arabidopsis thaliana (Mouse-ear cress), this protein is Glucuronoxylan 4-O-methyltransferase 1 (GXM1).